The primary structure comprises 504 residues: Lysine--tRNA ligase (504 aa).

Positions 411 and 418 each coordinate Mg(2+).

Belongs to the class-II aminoacyl-tRNA synthetase family. In terms of assembly, homodimer. It depends on Mg(2+) as a cofactor.

It localises to the cytoplasm. It catalyses the reaction tRNA(Lys) + L-lysine + ATP = L-lysyl-tRNA(Lys) + AMP + diphosphate. This chain is Lysine--tRNA ligase, found in Clostridium botulinum (strain ATCC 19397 / Type A).